The primary structure comprises 142 residues: Large ribosomal subunit protein uL13 (142 aa).

It belongs to the universal ribosomal protein uL13 family. In terms of assembly, part of the 50S ribosomal subunit.

Its function is as follows. This protein is one of the early assembly proteins of the 50S ribosomal subunit, although it is not seen to bind rRNA by itself. It is important during the early stages of 50S assembly. The chain is Large ribosomal subunit protein uL13 from Shigella sonnei (strain Ss046).